Here is a 142-residue protein sequence, read N- to C-terminus: Virulence-associated membrane protein 1 (142 aa).

Residues 1–20 (MRGILVALTAALIFCSLTPA) form the signal peptide. Residues 59 to 79 (IAIAVGTALVTLVSAGVGGML) form a helical membrane-spanning segment.

Monomer.

Its subcellular location is the membrane. Its function is as follows. During infection, may play a role in establishing and maintaining biotrophy; the formation of a tight interaction zone between the host and the pathogen. The chain is Virulence-associated membrane protein 1 from Mycosarcoma maydis (Corn smut fungus).